The sequence spans 310 residues: 2-methoxy-6-polyprenyl-1,4-benzoquinol methylase, mitochondrial (310 aa).

Residues 1-6 (MAHMRS) constitute a mitochondrion transit peptide. S-adenosyl-L-methionine-binding positions include Thr-99, Asp-154, and 182 to 183 (DA).

It belongs to the class I-like SAM-binding methyltransferase superfamily. MenG/UbiE family. In terms of assembly, component of a multi-subunit COQ enzyme complex, composed of at least coq3, coq4, coq5, coq6, coq7 and coq9.

The protein resides in the mitochondrion inner membrane. It catalyses the reaction a 2-methoxy-6-(all-trans-polyprenyl)benzene-1,4-diol + S-adenosyl-L-methionine = a 5-methoxy-2-methyl-3-(all-trans-polyprenyl)benzene-1,4-diol + S-adenosyl-L-homocysteine + H(+). The protein operates within cofactor biosynthesis; ubiquinone biosynthesis. Functionally, methyltransferase required for the conversion of 2-polyprenyl-6-methoxy-1,4-benzoquinol (DDMQH2) to 2-polyprenyl-3-methyl-6-methoxy-1,4-benzoquinol (DMQH2). The protein is 2-methoxy-6-polyprenyl-1,4-benzoquinol methylase, mitochondrial of Xenopus laevis (African clawed frog).